Reading from the N-terminus, the 677-residue chain is Heat shock transcription factor (677 aa).

Disordered stretches follow at residues 1 to 56 (MGHN…DDSN) and 115 to 164 (STSS…SQQP). Composition is skewed to polar residues over residues 115–131 (STSSAAKLSDGDLTNAT) and 143–164 (QPSSESQSHSNGYHKQGQSQQP). Residues 193–297 (ARPAFVNKLW…EYLLENIVRQ (105 aa)) mediate DNA binding. Positions 320–373 (ELETVKYNQLAIAEDLKRITKDNEMLWKENMMARERHQSQQQVLEKLLRFLSSV) are involved in trimerization. 2 stretches are compositionally biased toward low complexity: residues 400 to 416 (NHMSNNNHNNTGNINPN) and 457 to 501 (RSMS…QGQQ). 3 disordered regions span residues 400 to 444 (NHMS…VPLQ), 457 to 541 (RSMS…NQYS), and 606 to 677 (KLNP…RRAA). The tract at residues 466–677 (NLNQRQSPQN…NNGQKRRRAA (212 aa)) is activatory. Composition is skewed to polar residues over residues 502–541 (FSYPIQGGNQMMNQLGSPIGTQVGSPVGSQYGNQYGNQYS) and 629–641 (FANTGGSGQSEQP). Basic and acidic residues predominate over residues 650-669 (EELRNSRLHEPDRSFEEKNN).

The protein belongs to the HSF family. Homotrimer. Homotrimerization increases the affinity of HSF1 to DNA. Exhibits temperature-dependent phosphorylation.

It localises to the nucleus. Functionally, DNA-binding transcription factor that specifically binds heat shock promoter elements (HSE) and activates transcription. The chain is Heat shock transcription factor from Kluyveromyces lactis (strain ATCC 8585 / CBS 2359 / DSM 70799 / NBRC 1267 / NRRL Y-1140 / WM37) (Yeast).